Reading from the N-terminus, the 323-residue chain is MSFFVNRVWYGNHFLQWILVPFSWLYRIVIRTRRWYLQRFCQQLYPIPIIVVGNVTVGGVGKTPLVIEIAKKIQQKGLKVGIVSRGYKAAIKHFPYEVKLNDSAELVGDEPLMMARKINCPVVIAPKRNEAVRYLLDKHSVEIIISDDGLQHYKMGRSIEIVVIDGMRKLGNGFCLPAGPLREPDSRLKQVDFVIVNQGAAGGAYSMELIPKNIVRLSTQEEVSKDSFTSEVAAVAGIGNPQRFYSTLSQLGIKFNPYSYPDHHQFKPHDLNDIDLPVIMTEKDAVKCYSFSSDKLYYLPVEAKLNDSFWEAFWSHQQLQGYY.

An ATP-binding site is contributed by 56-63 (TVGGVGKT).

It belongs to the LpxK family.

The catalysed reaction is a lipid A disaccharide + ATP = a lipid IVA + ADP + H(+). Its pathway is glycolipid biosynthesis; lipid IV(A) biosynthesis; lipid IV(A) from (3R)-3-hydroxytetradecanoyl-[acyl-carrier-protein] and UDP-N-acetyl-alpha-D-glucosamine: step 6/6. Its function is as follows. Transfers the gamma-phosphate of ATP to the 4'-position of a tetraacyldisaccharide 1-phosphate intermediate (termed DS-1-P) to form tetraacyldisaccharide 1,4'-bis-phosphate (lipid IVA). This Legionella pneumophila (strain Lens) protein is Tetraacyldisaccharide 4'-kinase.